A 234-amino-acid chain; its full sequence is Triosephosphate isomerase (234 aa).

8–10 contacts substrate; the sequence is NFK. Residue His90 is the Electrophile of the active site. The Proton acceptor role is filled by Glu159. Substrate is bound by residues Gly165 and Ser197.

This sequence belongs to the triosephosphate isomerase family. Homodimer.

Its subcellular location is the cytoplasm. It carries out the reaction D-glyceraldehyde 3-phosphate = dihydroxyacetone phosphate. The protein operates within carbohydrate biosynthesis; gluconeogenesis. It functions in the pathway carbohydrate degradation; glycolysis; D-glyceraldehyde 3-phosphate from glycerone phosphate: step 1/1. Its function is as follows. Involved in the gluconeogenesis. Catalyzes stereospecifically the conversion of dihydroxyacetone phosphate (DHAP) to D-glyceraldehyde-3-phosphate (G3P). This is Triosephosphate isomerase from Helicobacter pylori (strain P12).